Here is a 345-residue protein sequence, read N- to C-terminus: MDYKTAGVDVQAGRAFIERIRSSVEATHRPEVIGGLGGFGGLMRLPAGLNKPLLVAGTDGVGTKLELAQQHQAHYGVGLDLVGMCVNDVITSGAEPLFFLDYIATGALSPEAMAQVVEGIAEGCRRSGCALLGGETAEMPGFYDPGCYDLAGFCVAVVEEDEMIDGRKIKPGDQIIGVASSGVHSNGFSLVRKVLALTEANKNTLFGCDNKPLIETLLTPTTLYGQLVKNLLEAKVPLHGMAHITGGGLPENLPRCCPKDLVTVIDPSSWTRPELFQWLQDAGQIPEHDLWHTFNLGVGFCLVVAEEVVSDVLQVCNEQALQAWPIGQVETASPSTGERLRGLPS.

This sequence belongs to the AIR synthase family.

Its subcellular location is the cytoplasm. The enzyme catalyses 2-formamido-N(1)-(5-O-phospho-beta-D-ribosyl)acetamidine + ATP = 5-amino-1-(5-phospho-beta-D-ribosyl)imidazole + ADP + phosphate + H(+). The protein operates within purine metabolism; IMP biosynthesis via de novo pathway; 5-amino-1-(5-phospho-D-ribosyl)imidazole from N(2)-formyl-N(1)-(5-phospho-D-ribosyl)glycinamide: step 2/2. This chain is Phosphoribosylformylglycinamidine cyclo-ligase, found in Prochlorococcus marinus (strain MIT 9313).